We begin with the raw amino-acid sequence, 548 residues long: MAAKDVKFGNEARIKMLRGVNVLADAVKVTLGPKGRNVVLDKSFGAPSITKDGVSVAREIELEDKFENMGAQMVKEVASKANDAAGDGTTTATLLAQSIVNEGLKAVAAGMNPMDLKRGIDKAVISAVEELKNLSVTCSDSKAITQVGTISANADEKVGSLIAEAMEKVGNDGVITVEEGTGLQDELEVVKGMQFDRGYLSPYFINKSETGIVELENPYILMADKKISNIREMLPILESVAKSGKPLLIISEDLEGEALATLVVNSMRGIVKVAAVKAPGFGDCRKAMLQDISILTNGTVISEELAMELEKSTLEDLGQAKRVVISKDTTTIIGGVGEKHAIQARINQIRQEIQDASSDYDKEKLNERLAKLAGGVAVLKVGAATEVEMKEKKARVEDALHATRAAVEEGVVAGGGVALVRVAGKLSNLRGQNEDQNVGIRVALRAMEAPLRQIVSNSGEEPSAVTNNVKDGKGNYGYNAATDEYGDMIDFGILDPTKVTRSALQYAGSVAGLMITTECMVTDLPKEDKSSDLGSAPAGGMGGMGGMM.

Residues 30–33, K51, 87–91, G415, 479–481, and D495 contribute to the ATP site; these read TLGP, DGTTT, and NAA. A disordered region spans residues 526-548; that stretch reads KEDKSSDLGSAPAGGMGGMGGMM. Gly residues predominate over residues 537 to 548; it reads PAGGMGGMGGMM.

This sequence belongs to the chaperonin (HSP60) family. As to quaternary structure, forms a cylinder of 14 subunits composed of two heptameric rings stacked back-to-back. Interacts with the co-chaperonin GroES.

It is found in the cytoplasm. The catalysed reaction is ATP + H2O + a folded polypeptide = ADP + phosphate + an unfolded polypeptide.. Its function is as follows. Together with its co-chaperonin GroES, plays an essential role in assisting protein folding. The GroEL-GroES system forms a nano-cage that allows encapsulation of the non-native substrate proteins and provides a physical environment optimized to promote and accelerate protein folding. The polypeptide is Chaperonin GroEL (Buchnera aphidicola subsp. Pterocomma populeum).